The chain runs to 30 residues: Cycloviolacin-O9 (30 aa).

Residues 1–30 constitute a cross-link (cyclopeptide (Gly-Asn)); sequence GIPCGESCVWIPCLTSAVGCSCKSKVCYRN. 3 disulfide bridges follow: C4–C20, C8–C22, and C13–C27.

Post-translationally, this is a cyclic peptide.

Its function is as follows. Probably participates in a plant defense mechanism. The polypeptide is Cycloviolacin-O9 (Viola odorata (Sweet violet)).